Consider the following 503-residue polypeptide: Probable cytochrome P450 303a1 (503 aa).

A heme-binding site is contributed by Cys448.

Belongs to the cytochrome P450 family. Heme is required as a cofactor.

Its subcellular location is the endoplasmic reticulum membrane. The protein localises to the microsome membrane. In terms of biological role, may be involved in the metabolism of insect hormones and in the breakdown of synthetic insecticides. The chain is Probable cytochrome P450 303a1 (Cyp303a1) from Drosophila melanogaster (Fruit fly).